Here is a 79-residue protein sequence, read N- to C-terminus: CDC42 small effector protein 1-B (79 aa).

Residues C10 and C11 are each lipidated (S-palmitoyl cysteine). The region spanning 30 to 43 (IGEPMNFVHLTHIG) is the CRIB domain. The interval 41 to 79 (HIGSGDMGASDGLPKAGTVQEQMRSKCGRDRQWSNSRVL) is disordered. The segment covering 63 to 72 (MRSKCGRDRQ) has biased composition (basic and acidic residues).

It belongs to the CDC42SE/SPEC family.

It is found in the cytoplasm. Its subcellular location is the cytoskeleton. The protein resides in the cell membrane. Its function is as follows. Probably involved in the organization of the actin cytoskeleton by acting downstream of CDC42, inducing actin filament assembly. In Xenopus laevis (African clawed frog), this protein is CDC42 small effector protein 1-B (cdc42se1-b).